The chain runs to 306 residues: Protein YIPF1 (306 aa).

The Cytoplasmic portion of the chain corresponds to 1 to 119 (MAAVDDLQFE…VRLYIRSNPD (119 aa)). A disordered region spans residues 14-62 (NAATSLTANPDATTVNIEDPGETPKHQPGSPRGSGREEDDELLGNDDSD). A compositionally biased stretch (polar residues) spans 15–29 (AATSLTANPDATTVN). Over residues 50-59 (EEDDELLGND) the composition is skewed to acidic residues. Residues 120-140 (LYGPFWICATLVFAIAISGNL) form a helical membrane-spanning segment. Topologically, residues 141–162 (SNFLIHLGEKTYHYVPEFRKVS) are lumenal. The chain crosses the membrane as a helical span at residues 163–183 (IAATIIYAYAWLVPLALWGFL). The Cytoplasmic portion of the chain corresponds to 184 to 200 (MWRNSKVMNIVSYSFLE). A helical transmembrane segment spans residues 201-221 (IVCVYGYSLFIYIPTAILWII). At 222-227 (PQKAVR) the chain is on the lumenal side. The chain crosses the membrane as a helical span at residues 228 to 248 (WILVMIALGISGSLLAMTFWP). Residues 249 to 256 (AVREDNRR) lie on the Cytoplasmic side of the membrane. Residues 257 to 277 (VALATIVTIVLLHMLLSVGCL) traverse the membrane as a helical segment. Topologically, residues 278–306 (AYFFDAPEMDHLPTTTATPNQTVAAAKSS) are lumenal. N-linked (GlcNAc...) asparagine glycosylation occurs at Asn-297.

The protein belongs to the YIP1 family. As to quaternary structure, interacts with YIPF6; this interaction may stabilize YIPF1. May also form a ternary complex with YIPF2 and YIPF6.

The protein resides in the golgi apparatus. Its subcellular location is the cis-Golgi network membrane. The protein localises to the trans-Golgi network membrane. It localises to the late endosome membrane. The sequence is that of Protein YIPF1 (YIPF1) from Homo sapiens (Human).